A 600-amino-acid polypeptide reads, in one-letter code: NADH-quinone oxidoreductase subunit C/D (600 aa).

Positions 1 to 190 (MVNNMTDLTA…SPFELTKAKQ (190 aa)) are NADH dehydrogenase I subunit C. Positions 214–600 (DFMFLNLGPN…IDFVMSDVDR (387 aa)) are NADH dehydrogenase I subunit D.

The protein in the N-terminal section; belongs to the complex I 30 kDa subunit family. In the C-terminal section; belongs to the complex I 49 kDa subunit family. In terms of assembly, NDH-1 is composed of 13 different subunits. Subunits NuoB, CD, E, F, and G constitute the peripheral sector of the complex.

The protein resides in the cell inner membrane. The catalysed reaction is a quinone + NADH + 5 H(+)(in) = a quinol + NAD(+) + 4 H(+)(out). In terms of biological role, NDH-1 shuttles electrons from NADH, via FMN and iron-sulfur (Fe-S) centers, to quinones in the respiratory chain. The immediate electron acceptor for the enzyme in this species is believed to be ubiquinone. Couples the redox reaction to proton translocation (for every two electrons transferred, four hydrogen ions are translocated across the cytoplasmic membrane), and thus conserves the redox energy in a proton gradient. This Escherichia coli (strain ATCC 8739 / DSM 1576 / NBRC 3972 / NCIMB 8545 / WDCM 00012 / Crooks) protein is NADH-quinone oxidoreductase subunit C/D.